Reading from the N-terminus, the 224-residue chain is Peroxiredoxin-6 (224 aa).

Residues 4–168 (LLLGDEAPNF…ILRVVDSLQL (165 aa)) form the Thioredoxin domain. The interval 30 to 39 (DSWGILFSHP) is required and sufficient for targeting to lysosomes and lamellar bodies. Catalysis depends on Cys-46, which acts as the Cysteine sulfenic acid (-SOH) intermediate; for peroxidase activity. Position 88 is a phosphotyrosine (Tyr-88). Asp-139 acts as the For phospholipase activity in catalysis. The residue at position 176 (Thr-176) is a Phosphothreonine; by MAPK.

The protein belongs to the peroxiredoxin family. Prx6 subfamily. Homodimer. Interacts with GSTP1; mediates PRDX6 glutathionylation and regeneration. Irreversibly inactivated by overoxidation of Cys-46 to sulfinic acid (Cys-SO(2)H) and sulfonic acid (Cys-SO(3)H) forms upon oxidative stress. In terms of processing, phosphorylation at Thr-176 by MAP kinases increases the phospholipase activity of the enzyme. The phosphorylated form exhibits a greater lysophosphatidylcholine acyltransferase activity compared to the non-phosphorylated form.

It localises to the cytoplasm. The protein localises to the lysosome. It carries out the reaction a hydroperoxide + 2 glutathione = an alcohol + glutathione disulfide + H2O. It catalyses the reaction a 1,2-diacyl-sn-glycero-3-phosphocholine + H2O = a 1-acyl-sn-glycero-3-phosphocholine + a fatty acid + H(+). The enzyme catalyses a 1-acyl-sn-glycero-3-phosphocholine + an acyl-CoA = a 1,2-diacyl-sn-glycero-3-phosphocholine + CoA. The catalysed reaction is 1-hexadecanoyl-sn-glycero-3-phosphocholine + hexadecanoyl-CoA = 1,2-dihexadecanoyl-sn-glycero-3-phosphocholine + CoA. It carries out the reaction 1,2-dihexadecanoyl-sn-glycero-3-phosphocholine + H2O = 1-hexadecanoyl-sn-glycero-3-phosphocholine + hexadecanoate + H(+). Functionally, thiol-specific peroxidase that catalyzes the reduction of hydrogen peroxide and organic hydroperoxides to water and alcohols, respectively. Can reduce H(2)O(2) and short chain organic, fatty acid, and phospholipid hydroperoxides. Also has phospholipase activity, and can therefore either reduce the oxidized sn-2 fatty acyl group of phospholipids (peroxidase activity) or hydrolyze the sn-2 ester bond of phospholipids (phospholipase activity). These activities are dependent on binding to phospholipids at acidic pH and to oxidized phospholipds at cytosolic pH. Plays a role in cell protection against oxidative stress by detoxifying peroxides and in phospholipid homeostasis. Exhibits acyl-CoA-dependent lysophospholipid acyltransferase which mediates the conversion of lysophosphatidylcholine (1-acyl-sn-glycero-3-phosphocholine or LPC) into phosphatidylcholine (1,2-diacyl-sn-glycero-3-phosphocholine or PC). Shows a clear preference for LPC as the lysophospholipid and for palmitoyl CoA as the fatty acyl substrate. In Gallus gallus (Chicken), this protein is Peroxiredoxin-6 (PRDX6).